A 241-amino-acid polypeptide reads, in one-letter code: Ureidoacrylate amidohydrolase RutB (241 aa).

D38 functions as the Proton acceptor in the catalytic mechanism. Residue K147 is part of the active site. The Nucleophile role is filled by C180.

This sequence belongs to the isochorismatase family. RutB subfamily.

It carries out the reaction (Z)-3-ureidoacrylate + H2O + H(+) = (Z)-3-aminoacrylate + NH4(+) + CO2. It catalyses the reaction (Z)-3-ureidoacrylate + H2O = (Z)-3-aminoacrylate + carbamate + H(+). The catalysed reaction is (Z)-2-methylureidoacrylate + H2O + H(+) = (Z)-2-methylaminoacrylate + NH4(+) + CO2. Its function is as follows. Hydrolyzes ureidoacrylate to form aminoacrylate and carbamate. The carbamate hydrolyzes spontaneously, thereby releasing one of the nitrogen atoms of the pyrimidine ring as ammonia and one of its carbon atoms as CO2. This is Ureidoacrylate amidohydrolase RutB from Haliangium ochraceum (strain DSM 14365 / JCM 11303 / SMP-2).